Consider the following 215-residue polypeptide: MENLAWSPFKSLTAEQREQIDRFREQLLRFNQRVNLISPETEDTFRTRHLLHCLTLTARDFPAGCTVVDWGTGGGLPAIPLAICHPEATVVGVDSVGKKSRAVRTIARRLGLDNCFTWNGRADEWTGEAHYSVSRATAPLADLWAWHRRVAVSPDDPNGDAWPPGLLALKGGDLSDEVAALHAADPDARVERHSLNDLLGRNGFFGEKEIVAVRS.

S-adenosyl-L-methionine-binding residues include glycine 71, leucine 76, and arginine 135.

It belongs to the methyltransferase superfamily. RNA methyltransferase RsmG family.

It localises to the cytoplasm. Specifically methylates the N7 position of a guanine in 16S rRNA. In Salinibacter ruber (strain DSM 13855 / M31), this protein is Ribosomal RNA small subunit methyltransferase G.